The sequence spans 267 residues: FCS-Like Zinc finger 8 (267 aa).

Disordered stretches follow at residues 1 to 29 and 124 to 156; these read MLKKRSRSKQALMAETNQSQNQKQSKTTP and DSPISSSDFGIKTRNSQPETKKPGSESGLGSPR. Composition is skewed to polar residues over residues 15-28 and 126-141; these read ETNQSQNQKQSKTT and PISSSDFGIKTRNSQP. The FLZ-type zinc-finger motif lies at 221–265; that stretch reads SFLSCCCNCKKSLGPRDDIFMYRGDRAFCSSECRSIEMMMSEEND.

This sequence belongs to the FLZ family. In terms of assembly, interacts with KIN10 and KIN11 via its FLZ-type zinc finger domain. Interacts with KINB1, KINB2, KINB3 and SNF4 via its N-terminal part. Interacts with HB21/ZHD3.

Functionally, may act as an adapter to facilitate the interaction of SnRK1 complex with effector proteins, conferring tissue- and stimulus-type specific differences in the SnRK1 regulation pathway. This Arabidopsis thaliana (Mouse-ear cress) protein is FCS-Like Zinc finger 8.